The primary structure comprises 253 residues: Claudin domain-containing protein 1 (253 aa).

A helical membrane pass occupies residues 5 to 25 (FATAFVIACVLSLISTIYMAA). Asn42 and Asn72 each carry an N-linked (GlcNAc...) asparagine glycan. Helical transmembrane passes span 141–161 (FLLP…GLCA), 175–195 (ILHL…VAGI), and 216–236 (FCLA…FIWA).

It belongs to the PMP-22/EMP/MP20 family.

It localises to the cell junction. It is found in the tight junction. The protein localises to the cell membrane. Its function is as follows. Plays a role in negatively regulating the permeability of cells to small molecules. The protein is Claudin domain-containing protein 1 (CLDND1) of Macaca fascicularis (Crab-eating macaque).